A 151-amino-acid chain; its full sequence is Large ribosomal subunit protein uL22 (151 aa).

The interval 1 to 25 (MARINYSVKEDPETTSKAMGSELHI) is disordered.

Belongs to the universal ribosomal protein uL22 family. As to quaternary structure, part of the 50S ribosomal subunit.

This protein binds specifically to 23S rRNA. It makes multiple contacts with different domains of the 23S rRNA in the assembled 50S subunit and ribosome. Its function is as follows. The globular domain of the protein is located near the polypeptide exit tunnel on the outside of the subunit, while an extended beta-hairpin is found that lines the wall of the exit tunnel in the center of the 70S ribosome. This Methanosarcina barkeri (strain Fusaro / DSM 804) protein is Large ribosomal subunit protein uL22.